A 364-amino-acid chain; its full sequence is Cobalt-precorrin-5B C(1)-methyltransferase (364 aa).

This sequence belongs to the CbiD family.

It carries out the reaction Co-precorrin-5B + S-adenosyl-L-methionine = Co-precorrin-6A + S-adenosyl-L-homocysteine. The protein operates within cofactor biosynthesis; adenosylcobalamin biosynthesis; cob(II)yrinate a,c-diamide from sirohydrochlorin (anaerobic route): step 6/10. Functionally, catalyzes the methylation of C-1 in cobalt-precorrin-5B to form cobalt-precorrin-6A. This Pseudomonas putida (strain ATCC 47054 / DSM 6125 / CFBP 8728 / NCIMB 11950 / KT2440) protein is Cobalt-precorrin-5B C(1)-methyltransferase.